Here is a 170-residue protein sequence, read N- to C-terminus: Small ribosomal subunit protein uS4 (170 aa).

In terms of domain architecture, S4 RNA-binding spans Arg100–Ala164.

Belongs to the universal ribosomal protein uS4 family. Part of the 30S ribosomal subunit. Contacts protein S5. The interaction surface between S4 and S5 is involved in control of translational fidelity.

In terms of biological role, one of the primary rRNA binding proteins, it binds directly to 16S rRNA where it nucleates assembly of the body of the 30S subunit. Functionally, with S5 and S12 plays an important role in translational accuracy. This Halobacterium salinarum (strain ATCC 29341 / DSM 671 / R1) protein is Small ribosomal subunit protein uS4.